The following is an 89-amino-acid chain: Small ribosomal subunit protein bS20 (89 aa).

It belongs to the bacterial ribosomal protein bS20 family.

Its function is as follows. Binds directly to 16S ribosomal RNA. The polypeptide is Small ribosomal subunit protein bS20 (Stenotrophomonas maltophilia (strain K279a)).